The following is a 300-amino-acid chain: Cell shape-determining protein MreC (300 aa).

The Cytoplasmic segment spans residues 1–17 (MARDRTRPEDFTRPLRR). Residues 18-38 (ILVGGLVLLLLGIFLIWRIDS) traverse the membrane as a helical segment. Residues 39–300 (PRVEQFRAAL…APAAVEGADG (262 aa)) lie on the Periplasmic side of the membrane. Residues 74–117 (QSYTRIYEQNQELRRELQQMKAWKEAALQLEQKNARLLDLNQVR) are a coiled coil. Residues 277 to 300 (SDPGKLVAEPPAPPAPAAVEGADG) form a disordered region.

The protein belongs to the MreC family.

It localises to the cell inner membrane. Functionally, involved in formation and maintenance of cell shape. The protein is Cell shape-determining protein MreC of Cereibacter sphaeroides (Rhodobacter sphaeroides).